We begin with the raw amino-acid sequence, 477 residues long: Pup--protein ligase (477 aa).

Residue glutamate 16 coordinates Mg(2+). Arginine 60 serves as a coordination point for ATP. Tyrosine 62 contacts Mg(2+). The Proton acceptor role is filled by aspartate 64. Glutamate 70 contacts Mg(2+). Threonine 73 and tryptophan 441 together coordinate ATP.

It belongs to the Pup ligase/Pup deamidase family. Pup-conjugating enzyme subfamily.

It carries out the reaction ATP + [prokaryotic ubiquitin-like protein]-L-glutamate + [protein]-L-lysine = ADP + phosphate + N(6)-([prokaryotic ubiquitin-like protein]-gamma-L-glutamyl)-[protein]-L-lysine.. Its pathway is protein degradation; proteasomal Pup-dependent pathway. The protein operates within protein modification; protein pupylation. Catalyzes the covalent attachment of the prokaryotic ubiquitin-like protein modifier Pup to the proteasomal substrate proteins, thereby targeting them for proteasomal degradation. This tagging system is termed pupylation. The ligation reaction involves the side-chain carboxylate of the C-terminal glutamate of Pup and the side-chain amino group of a substrate lysine. This is Pup--protein ligase from Corynebacterium kroppenstedtii (strain DSM 44385 / JCM 11950 / CIP 105744 / CCUG 35717).